Consider the following 1418-residue polypeptide: ABC transporter G family member 38 (1418 aa).

Positions 1–27 (MAHYRVSSEVENIMNRDRSHRKNEEED) are disordered. One can recognise an ABC transporter 1 domain in the interval 147–419 (TKIRVLPDRK…FEFMGFKCPE (273 aa)). An ATP-binding site is contributed by 179-186 (GPPGSGKS). The ABC transmembrane type-2 1 domain occupies 497 to 710 (ELLKACLERE…IQTAVSVNEF (214 aa)). 6 consecutive transmembrane segments (helical) span residues 516–536 (TFVLKSLQLIINAILIGVVFW), 548–568 (GIIYMGAIYLEVQMIVFSGFF), 600–620 (IITFPLSFVEVFIVVLITYFT), 634–654 (YLVLALCGQMSYGLFRCIAAV), 659–679 (VVSNTMGCLAVMWLMTFSGYV), and 729–749 (FFVETYWYWIGLLALILSTIL). In terms of domain architecture, ABC transporter 2 spans 821–1073 (MTFENITYSV…QLIEYFEGIR (253 aa)). 866-873 (GVSGAGKT) provides a ligand contact to ATP. In terms of domain architecture, ABC transmembrane type-2 2 spans 1146 to 1360 (SQFQACLWKQ…GLYGLTIAQY (215 aa)). The next 7 helical transmembrane spans lie at 1167-1187 (AVRFSFGAAVGIMYGIIFWSL), 1197-1217 (IFNSVGAMSTVVGFLSSQSAA), 1249-1269 (VIIEIPYTMAQACIYGVIVYG), 1284-1304 (IFFTFISILYSIYTGIMVISV), 1310-1330 (IASILNGVISTSWNVFSGFTI), 1341-1361 (WFTYVCPGWWGLYGLTIAQYG), and 1387-1407 (FLWVVSLTLIAFSMFFVFIYA).

This sequence belongs to the ABC transporter superfamily. ABCG family. PDR (TC 3.A.1.205) subfamily. As to expression, expressed in roots and siliques at low levels.

The protein localises to the membrane. Its function is as follows. May be a general defense protein. In Arabidopsis thaliana (Mouse-ear cress), this protein is ABC transporter G family member 38 (ABCG38).